The primary structure comprises 397 residues: Elongation factor Tu-1 (397 aa).

The 197-residue stretch at 10–206 (KPHVNIGTIG…AVDENIPEPE (197 aa)) folds into the tr-type G domain. Residues 19–26 (GHIDHGKT) form a G1 region. Residue 19–26 (GHIDHGKT) participates in GTP binding. A Mg(2+)-binding site is contributed by threonine 26. Positions 62–66 (GITIS) are G2. The tract at residues 83-86 (DCPG) is G3. GTP-binding positions include 83–87 (DCPGH) and 138–141 (NKAD). Residues 138–141 (NKAD) form a G4 region. A G5 region spans residues 176–178 (SAL). The residue at position 386 (threonine 386) is a Phosphothreonine.

The protein belongs to the TRAFAC class translation factor GTPase superfamily. Classic translation factor GTPase family. EF-Tu/EF-1A subfamily. In terms of assembly, monomer. In terms of processing, phosphorylated on threonine and serine.

Its subcellular location is the cytoplasm. The enzyme catalyses GTP + H2O = GDP + phosphate + H(+). GTP hydrolase that promotes the GTP-dependent binding of aminoacyl-tRNA to the A-site of ribosomes during protein biosynthesis. The chain is Elongation factor Tu-1 from Streptomyces collinus.